A 455-amino-acid chain; its full sequence is MALWGGRFQGETSALFKLFNDSLPVDYRLFEQDVVGSIAWADAIASVGIITATECSDLKKALNDLLVEVNGDPAIILASGAEDIHSFVESALIAKVGDLGKKLHTGRSRNDQVATDLKLWCQSEGAALLARLQSLHAELLALAEREFDAVMPGYTHLQRAQPVTFGHWCLAYVEMYERDISRLADALTRANTCPLGSGALAGTAYKMDRHALAAALNFASPTLNSLDSVSDRDHVVELCSTASISMMHLSRMAEDLIFFNSGEANFISLSDEVTSGSSLMPQKKNPDALELIRGKTGRVYGSLVGILTTMKALPLAYNKDMQEDKEGLFDVVDSWAICLDMAALVLSGLKVNRPNALLAAQQGYANSTELADYLVSKGMPFREAHHVVGEVVVAAIAKQIPLEEFSLAELKTFAAIIEDDVYPNLTIEACLAKRDVLGGTALPQIQQAIAAKKAR.

This sequence belongs to the lyase 1 family. Argininosuccinate lyase subfamily.

It is found in the cytoplasm. It carries out the reaction 2-(N(omega)-L-arginino)succinate = fumarate + L-arginine. It functions in the pathway amino-acid biosynthesis; L-arginine biosynthesis; L-arginine from L-ornithine and carbamoyl phosphate: step 3/3. This chain is Argininosuccinate lyase, found in Shewanella baltica (strain OS155 / ATCC BAA-1091).